The sequence spans 97 residues: UPF0390 protein CNBD1430 (97 aa).

Disordered regions lie at residues 1–57 (MAQG…INNS) and 75–97 (RNVGELESGEGKDGKAKGKGKSR). Residues 29 to 46 (GKREVAPKDRQRVLERSQ) show a composition bias toward basic and acidic residues. The segment covering 48-57 (KQLSSKINNS) has biased composition (polar residues).

It belongs to the UPF0390 family.

In Cryptococcus neoformans var. neoformans serotype D (strain B-3501A) (Filobasidiella neoformans), this protein is UPF0390 protein CNBD1430.